The chain runs to 302 residues: Bifunctional ligase/repressor BirA (302 aa).

A DNA-binding region (H-T-H motif) is located at residues 14–33 (QPKVRSELEKFSKNLEEDIQ). Residues 62-236 (QISTALFPYS…HLYTRLNIFE (175 aa)) form the BPL/LPL catalytic domain. Biotin is bound by residues 80 to 82 (STN), Q103, 107 to 109 (RGR), and K167.

It belongs to the biotin--protein ligase family.

It carries out the reaction biotin + L-lysyl-[protein] + ATP = N(6)-biotinyl-L-lysyl-[protein] + AMP + diphosphate + H(+). Functionally, acts both as a biotin--[acetyl-CoA-carboxylase] ligase and a biotin-operon repressor. In the presence of ATP, BirA activates biotin to form the BirA-biotinyl-5'-adenylate (BirA-bio-5'-AMP or holoBirA) complex. HoloBirA can either transfer the biotinyl moiety to the biotin carboxyl carrier protein (BCCP) subunit of acetyl-CoA carboxylase, or bind to the biotin operator site and inhibit transcription of the operon. This Haemophilus influenzae (strain ATCC 51907 / DSM 11121 / KW20 / Rd) protein is Bifunctional ligase/repressor BirA.